We begin with the raw amino-acid sequence, 121 residues long: Protein yippee-like At3g55890 (121 aa).

The Yippee domain maps to 12–109 (NIYICKLCKT…LELYKISGPH (98 aa)). Positions 16, 19, 72, and 75 each coordinate Zn(2+).

The protein belongs to the yippee family.

This Arabidopsis thaliana (Mouse-ear cress) protein is Protein yippee-like At3g55890.